Reading from the N-terminus, the 240-residue chain is Citrate synthase-lysine N-methyltransferase CSKMT, mitochondrial (240 aa).

A mitochondrion-targeting transit peptide spans 1-21; sequence MAALRRMLHLPRLTMGTCRPF.

This sequence belongs to the methyltransferase superfamily.

Its subcellular location is the mitochondrion. The enzyme catalyses L-lysyl-[citrate synthase] + S-adenosyl-L-methionine = N(6)-methyl-L-lysyl-[citrate synthase] + S-adenosyl-L-homocysteine + H(+). The catalysed reaction is N(6)-methyl-L-lysyl-[citrate synthase] + S-adenosyl-L-methionine = N(6),N(6)-dimethyl-L-lysyl-[citrate synthase] + S-adenosyl-L-homocysteine + H(+). It catalyses the reaction N(6),N(6)-dimethyl-L-lysyl-[citrate synthase] + S-adenosyl-L-methionine = N(6),N(6),N(6)-trimethyl-L-lysyl-[citrate synthase] + S-adenosyl-L-homocysteine + H(+). Citrate synthase-lysine methyltransferase activity is inhibited by S-adenosylhomocysteine (AdoHcy) and oxaloacetate (OAA). In terms of biological role, protein-lysine methyltransferase that selectively trimethylates citrate synthase (CS) in mitochondria. Seems to conduct trimethylation in a highly distributive manner rather than in a processive manner, and thus introduces a single methyl group per binding event. The sequence is that of Citrate synthase-lysine N-methyltransferase CSKMT, mitochondrial from Pongo abelii (Sumatran orangutan).